We begin with the raw amino-acid sequence, 683 residues long: Dixin (683 aa).

The N-myristoyl glycine moiety is linked to residue Leu2. The Calponin-homology (CH) domain occupies 20 to 127; the sequence is EQQLQAYVAW…LVLALAAHFK (108 aa). An actin-binding region spans residues 127 to 300; that stretch reads KPGSSRTVNQ…LEKEMEEAKK (174 aa). Ser186 is modified (phosphoserine). Residues 207 to 235 form a disordered region; sequence GQQRSPSESSCSSLTSPSPIHSAKSESII. A compositionally biased stretch (low complexity) spans 211-228; the sequence is SPSESSCSSLTSPSPIHS. Ser231 is subject to Phosphoserine. Positions 279–452 form a coiled coil; the sequence is SWEEQLLEQQ…EALRKLSDVS (174 aa). Over residues 482–492 the composition is skewed to polar residues; that stretch reads NYNSHNSQSNG. 2 disordered regions span residues 482–509 and 556–594; these read NYNS…SNRG and TQKK…QSSP. Ser590 is modified (phosphoserine). The DIX domain occupies 600–680; the sequence is CTKVLYFTDR…KIVAWVEEDH (81 aa).

Belongs to the DIXDC1 family. Isoform 1 but not isoform 2 binds filamentous actin. Interacts with the complex composed of DVL2 and Rac. Interacts with AXIN1; competes with MAP3K1. Interacts with MAP3K4 preventing MAP3K4 interaction with AXIN1. Directly interacts (via DIX domain) with DVL2 (via DIX domain). Interacts with gamma-tubulin. Phosphorylated on tyrosine and serine residues. In terms of processing, polyubiquitinated, leading to its proteasomal degradation. WNT3A signaling increases DIXDC1 protein levels by inhibiting its ubiquitination and subsequent degradation. As to expression, ubiquitously expressed with higher expression in cardiac and skeletal muscles.

The protein resides in the cell junction. It localises to the focal adhesion. It is found in the cytoplasm. The protein localises to the cytoskeleton. Its subcellular location is the stress fiber. Its function is as follows. Positive effector of the Wnt signaling pathway; activates WNT3A signaling via DVL2. Regulates JNK activation by AXIN1 and DVL2. This is Dixin (DIXDC1) from Homo sapiens (Human).